Consider the following 363-residue polypeptide: Aminomethyltransferase (363 aa).

It belongs to the GcvT family. The glycine cleavage system is composed of four proteins: P, T, L and H.

It carries out the reaction N(6)-[(R)-S(8)-aminomethyldihydrolipoyl]-L-lysyl-[protein] + (6S)-5,6,7,8-tetrahydrofolate = N(6)-[(R)-dihydrolipoyl]-L-lysyl-[protein] + (6R)-5,10-methylene-5,6,7,8-tetrahydrofolate + NH4(+). Functionally, the glycine cleavage system catalyzes the degradation of glycine. In Nitrosomonas europaea (strain ATCC 19718 / CIP 103999 / KCTC 2705 / NBRC 14298), this protein is Aminomethyltransferase.